Here is a 611-residue protein sequence, read N- to C-terminus: Phosphomethylpyrimidine synthase (611 aa).

Residues asparagine 212, methionine 241, tyrosine 270, histidine 306, serine 326–glycine 328, aspartate 367–arginine 370, and glutamate 406 each bind substrate. Histidine 410 contacts Zn(2+). A substrate-binding site is contributed by tyrosine 433. A Zn(2+)-binding site is contributed by histidine 474. Residues cysteine 554, cysteine 557, and cysteine 562 each contribute to the [4Fe-4S] cluster site.

This sequence belongs to the ThiC family. As to quaternary structure, homodimer. [4Fe-4S] cluster is required as a cofactor.

The catalysed reaction is 5-amino-1-(5-phospho-beta-D-ribosyl)imidazole + S-adenosyl-L-methionine = 4-amino-2-methyl-5-(phosphooxymethyl)pyrimidine + CO + 5'-deoxyadenosine + formate + L-methionine + 3 H(+). Its pathway is cofactor biosynthesis; thiamine diphosphate biosynthesis. In terms of biological role, catalyzes the synthesis of the hydroxymethylpyrimidine phosphate (HMP-P) moiety of thiamine from aminoimidazole ribotide (AIR) in a radical S-adenosyl-L-methionine (SAM)-dependent reaction. This is Phosphomethylpyrimidine synthase from Bartonella bacilliformis (strain ATCC 35685 / KC583 / Herrer 020/F12,63).